The following is a 497-amino-acid chain: Amino acid oxidase fsqB (497 aa).

Positions 14, 15, 38, 53, 57, 58, 63, 64, and 211 each coordinate FAD. An S-8alpha-FAD cysteine modification is found at C414. FAD is bound by residues F447 and K448.

It belongs to the MSOX/MTOX family. In terms of assembly, dimer. The cofactor is FAD.

The catalysed reaction is (2S,4S,5S)-2-amino-6-(3,4-dihydroxyphenyl)-4-hydroxy-5-(methylamino)hexanoyl-[peptidyl-carrier protein] + O2 = (2S,4S)-2-amino-4-[(3S)-7,8-dihydroxy-1,2,3,4-tetrahydroisoquinolin-3-yl]-4-hydroxybutanoyl-[peptidyl-carrier protein] + H2O2. The enzyme catalyses N-methyl-L-dopa + O2 = (3S)-7,8-dihydroxy-1,2,3,4-tetrahydroisoquinoline-3-carboxylate + H2O2. It carries out the reaction N-methyl-D-dopa + O2 = (3R)-7,8-dihydroxy-1,2,3,4-tetrahydroisoquinoline-3-carboxylate + H2O2. It functions in the pathway secondary metabolite biosynthesis. In terms of biological role, amino acid oxidase; part of the gene cluster that mediates the biosynthesis of the isoquinoline alkaloids fumisoquin A, fumisoquin B and fumisoquin C; as well as small amounts of fumipyrrole as a shunt metabolite. The products of the cluster lead to a brown coloration and are important for growth and conidiation. The nonribosomal peptide synthetase-like protein fsqF, which lacks a canonical condensation domain, is required for addition of a serine-derived dehydroalanine moiety to activated tyrosine but is not essential for the subsequent steps leading to isoquinoline formation. A different enzyme, most likely the ATP-grasp enzyme fsqD, is responsible for activation of tyrosine. Three additional enzymes encoded by the fsq cluster, the N-methyltransferase fsqC, the phenol 2-monooxygenase fsqG and the FAD-dependent oxidase fsqB, catalyze the formation of the isoquinoline ring system in the fumisoquins. FsqB converts the fspF thiolation domain-bound (2S,4S,5S)-2-amino-6-(3,4-dihydroxyphenyl)-4-hydroxy-5-(methylamino)hexanoyl into isoquinoline. The cyclization most likely proceeds via a two-step mechanism, beginning with FAD-dependent oxidation of the methyl group to an iminium species followed by electrophilic attack on the deprotonated phenol. Functionally, is able to convert N-methyl-3,4-dihydroxy-DL-phenylalanine (N-methyl-DOPA) directly into cyclic isoquinoline, in vitro. The absence of the meta-hydroxyl group, as in L-N-methyl-tyrosine, leads to a 25-fold lower rate of reduction and the formation of the demethylated product L-tyrosine, instead of a cyclic product. Does not accept the D-stereoisomer of N-methyltyrosine, in contrast to N-methyl-DOPA, for which both stereoisomers are oxidized with similar rates. The protein is Amino acid oxidase fsqB of Aspergillus fumigatus (strain ATCC MYA-4609 / CBS 101355 / FGSC A1100 / Af293) (Neosartorya fumigata).